A 273-amino-acid polypeptide reads, in one-letter code: Dermonecrotic toxin LruSicTox-alphaIC1c (273 aa).

The active site involves His5. Positions 25 and 27 each coordinate Mg(2+). The active-site Nucleophile is His41. Cystine bridges form between Cys45/Cys51 and Cys47/Cys190. A Mg(2+)-binding site is contributed by Asp85.

Belongs to the arthropod phospholipase D family. Class II subfamily. Mg(2+) serves as cofactor. As to expression, expressed by the venom gland.

It localises to the secreted. It carries out the reaction an N-(acyl)-sphingosylphosphocholine = an N-(acyl)-sphingosyl-1,3-cyclic phosphate + choline. The catalysed reaction is an N-(acyl)-sphingosylphosphoethanolamine = an N-(acyl)-sphingosyl-1,3-cyclic phosphate + ethanolamine. The enzyme catalyses a 1-acyl-sn-glycero-3-phosphocholine = a 1-acyl-sn-glycero-2,3-cyclic phosphate + choline. It catalyses the reaction a 1-acyl-sn-glycero-3-phosphoethanolamine = a 1-acyl-sn-glycero-2,3-cyclic phosphate + ethanolamine. Functionally, dermonecrotic toxins cleave the phosphodiester linkage between the phosphate and headgroup of certain phospholipids (sphingolipid and lysolipid substrates), forming an alcohol (often choline) and a cyclic phosphate. This toxin acts on sphingomyelin (SM). It may also act on ceramide phosphoethanolamine (CPE), lysophosphatidylcholine (LPC) and lysophosphatidylethanolamine (LPE), but not on lysophosphatidylserine (LPS), and lysophosphatidylglycerol (LPG). It acts by transphosphatidylation, releasing exclusively cyclic phosphate products as second products. Induces dermonecrosis, hemolysis, increased vascular permeability, edema, inflammatory response, and platelet aggregation. The protein is Dermonecrotic toxin LruSicTox-alphaIC1c of Loxosceles rufescens (Mediterranean recluse spider).